The primary structure comprises 242 residues: Lactate utilization protein A 2 (242 aa).

Belongs to the LutA/YkgE family.

In terms of biological role, is involved in L-lactate degradation and allows cells to grow with lactate as the sole carbon source. This chain is Lactate utilization protein A 2, found in Bacillus cereus (strain AH820).